Consider the following 172-residue polypeptide: Mitochondrial import inner membrane translocase subunit Tim17-B (172 aa).

Residues Cys-9 and Cys-78 are joined by a disulfide bond. 3 helical membrane passes run 17–37, 61–77, and 113–133; these read CGGA…IKGF, QIGG…STID, and VGSA…GILL. The disordered stretch occupies residues 147 to 172; that stretch reads FLEDPSQLTPKEGSPAPGYPNYQQYH.

Belongs to the Tim17/Tim22/Tim23 family. In terms of assembly, component of the TIM23 complex at least composed of TIMM23, TIMM17 (TIMM17A or TIMM17B) and TIMM50. The complex interacts with the TIMM44 component of the PAM complex. The complex also interacts with DNAJC15.

Its subcellular location is the mitochondrion inner membrane. In terms of biological role, essential component of the TIM23 complex, a complex that mediates the translocation of transit peptide-containing proteins across the mitochondrial inner membrane. The protein is Mitochondrial import inner membrane translocase subunit Tim17-B (Timm17b) of Mus musculus (Mouse).